Consider the following 116-residue polypeptide: Nucleoid-associated protein P9215_00191 (116 aa).

It belongs to the YbaB/EbfC family. In terms of assembly, homodimer.

The protein localises to the cytoplasm. It localises to the nucleoid. Binds to DNA and alters its conformation. May be involved in regulation of gene expression, nucleoid organization and DNA protection. This is Nucleoid-associated protein P9215_00191 from Prochlorococcus marinus (strain MIT 9215).